The following is a 795-amino-acid chain: Probable diacylglycerol kinase 3 (795 aa).

2 EF-hand domains span residues 170–205 and 215–250; these read TPEN…MMNV and ELEQ…NIPL. Asp183, Asp185, Asn187, Glu194, Asp228, Asp230, Asp232, and Glu239 together coordinate Ca(2+). 2 consecutive Phorbol-ester/DAG-type zinc fingers follow at residues 265-316 and 329-375; these read SHVW…ATNC and YHHW…AQEC. One can recognise a DAGKc domain in the interval 423–558; it reads NDCRPLLVLV…MDRWQIKIEI (136 aa).

Belongs to the eukaryotic diacylglycerol kinase family. In terms of assembly, monomer.

It catalyses the reaction a 1,2-diacyl-sn-glycerol + ATP = a 1,2-diacyl-sn-glycero-3-phosphate + ADP + H(+). Functionally, involved in AFD-neuron mediated thermotaxis. Regulates behavior to environmental temperature. Thought to have a role in olfactory adaptation by affecting diacylglycerol levels. The sequence is that of Probable diacylglycerol kinase 3 (dgk-3) from Caenorhabditis elegans.